The following is a 410-amino-acid chain: D-3-phosphoglycerate dehydrogenase (410 aa).

NAD(+) is bound by residues 161 to 162 (HI), aspartate 181, 238 to 240 (ASR), and aspartate 264. Arginine 240 is a catalytic residue. The active site involves glutamate 269. Histidine 292 (proton donor) is an active-site residue. Residue 292 to 295 (HIGG) coordinates NAD(+). The region spanning 339–410 (RLMHIHENRP…PGTIRARLLY (72 aa)) is the ACT domain.

The protein belongs to the D-isomer specific 2-hydroxyacid dehydrogenase family. In terms of assembly, homotetramer.

The enzyme catalyses (2R)-3-phosphoglycerate + NAD(+) = 3-phosphooxypyruvate + NADH + H(+). The catalysed reaction is (R)-2-hydroxyglutarate + NAD(+) = 2-oxoglutarate + NADH + H(+). It functions in the pathway amino-acid biosynthesis; L-serine biosynthesis; L-serine from 3-phospho-D-glycerate: step 1/3. In bacteria displays feedback inhibition by L-serine. In terms of biological role, catalyzes the reversible oxidation of 3-phospho-D-glycerate to 3-phosphonooxypyruvate, the first step of the phosphorylated L-serine biosynthesis pathway. Also catalyzes the reversible oxidation of 2-hydroxyglutarate to 2-oxoglutarate. The protein is D-3-phosphoglycerate dehydrogenase (serA) of Escherichia coli O6:H1 (strain CFT073 / ATCC 700928 / UPEC).